The sequence spans 321 residues: MDSLTIVPPALLIISILMAVAFLTALERKIMGHMQLRKGPNIVGPLGLLQPFADGLKLITKELTLPLLATPTLFILAPTAALMLALAMWSPLPMPSPLADLNLGLLLLLAMSSLMVYSFLWSGWSSNSKYALMGAMRAVAQTISYEVTLAIIVLSIVLLSGGFSLHTLTVTQEPLYLALATWPSMMMWYTSTLAETNRAPFDLTEGESELVSGFNVEYSASPFALFFLAEYANIMLMNTLTTTLFLSPSTPTFLPALFTIALMSKALLLTMSFLWVRASYPRFRYDQLMHLLWKNFLPMTLTLCLWHSSVPMSMFGLPPMT.

A run of 8 helical transmembrane segments spans residues 6–26, 67–87, 103–123, 143–163, 174–194, 220–240, 256–276, and 296–316; these read IVPPALLIISILMAVAFLTAL, LLATPTLFILAPTAALMLALA, LGLLLLLAMSSLMVYSFLWSG, ISYEVTLAIIVLSIVLLSGGF, PLYLALATWPSMMMWYTSTLA, ASPFALFFLAEYANIMLMNTL, ALFTIALMSKALLLTMSFLWV, and FLPMTLTLCLWHSSVPMSMFG.

The protein belongs to the complex I subunit 1 family.

The protein resides in the mitochondrion inner membrane. The catalysed reaction is a ubiquinone + NADH + 5 H(+)(in) = a ubiquinol + NAD(+) + 4 H(+)(out). Its function is as follows. Core subunit of the mitochondrial membrane respiratory chain NADH dehydrogenase (Complex I) that is believed to belong to the minimal assembly required for catalysis. Complex I functions in the transfer of electrons from NADH to the respiratory chain. The immediate electron acceptor for the enzyme is believed to be ubiquinone. This chain is NADH-ubiquinone oxidoreductase chain 1 (MT-ND1), found in Alligator mississippiensis (American alligator).